Reading from the N-terminus, the 605-residue chain is Insulin-like growth factor-binding protein complex acid labile subunit (605 aa).

A signal peptide spans 1–27; sequence MALRKGGLALALLLLSWVALGPRSLEG. In terms of domain architecture, LRRNT spans 32-74; that stretch reads TPGEAEGPACPAACVCSYDDDADELSVFCSSRNLTRLPDGVPG. Disulfide bonds link C41–C47 and C45–C60. 3 N-linked (GlcNAc...) asparagine glycosylation sites follow: N64, N85, and N96. 19 LRR repeats span residues 75 to 96, 99 to 120, 123 to 144, 147 to 168, 171 to 192, 195 to 216, 219 to 240, 243 to 264, 267 to 288, 291 to 312, 315 to 336, 339 to 360, 363 to 384, 387 to 408, 411 to 432, 435 to 456, 459 to 480, 483 to 504, and 507 to 528; these read GTQALWLDGNNLSSVPPAAFQN, SLGFLNLQGGQLGSLEPQALLG, NLCHLHLERNQLRSLALGTFAH, ALASLGLSNNRLSRLEDGLFEG, SLWDLNLGWNSLAVLPDAAFRG, SLRELVLAGNRLAYLQPALFSG, ELRELDLSRNALRAIKANVFVQ, RLQKLYLDRNLIAAVAPGAFLG, ALRWLDLSHNRVAGLLEDTFPG, GLRVLRLSHNAIASLRPRTFKD, FLEELQLGHNRIRQLAERSFEG, QLEVLTLDHNQLQEVKAGAFLG, NVAVMNLSGNCLRNLPEQVFRG, KLHSLHLEGSCLGRIRPHTFTG, GLRRLFLKDNGLVGIEEQSLWG, ELLELDLTSNQLTHLPHRLFQG, KLEYLLLSRNRLAELPADALGP, RAFWLDVSHNRLEALPNSLLAP, and RLRYLSLRNNSLRTFTPQPPGL. An N-linked (GlcNAc...) asparagine glycan is attached at N368. N515 is a glycosylation site (N-linked (GlcNAc...) asparagine). The 70-residue stretch at 536 to 605 folds into the LRRCT domain; it reads NPWDCGCPLK…DLSEAHFAPC (70 aa). 3 disulfides stabilise this stretch: C540–C583, C542–C605, and C566–C571. A glycan (N-linked (GlcNAc...) asparagine) is linked at N580.

As to quaternary structure, forms a ternary complex with IGF1 and IGFBP3. As to expression, plasma.

Its subcellular location is the secreted. It localises to the extracellular space. Involved in protein-protein interactions that result in protein complexes, receptor-ligand binding or cell adhesion. This chain is Insulin-like growth factor-binding protein complex acid labile subunit (IGFALS), found in Homo sapiens (Human).